A 211-amino-acid polypeptide reads, in one-letter code: Protein-L-isoaspartate O-methyltransferase (211 aa).

Ser-62 is an active-site residue.

This sequence belongs to the methyltransferase superfamily. L-isoaspartyl/D-aspartyl protein methyltransferase family.

Its subcellular location is the cytoplasm. The catalysed reaction is [protein]-L-isoaspartate + S-adenosyl-L-methionine = [protein]-L-isoaspartate alpha-methyl ester + S-adenosyl-L-homocysteine. Its function is as follows. Catalyzes the methyl esterification of L-isoaspartyl residues in peptides and proteins that result from spontaneous decomposition of normal L-aspartyl and L-asparaginyl residues. It plays a role in the repair and/or degradation of damaged proteins. The chain is Protein-L-isoaspartate O-methyltransferase from Shewanella piezotolerans (strain WP3 / JCM 13877).